Reading from the N-terminus, the 703-residue chain is Zinc finger CCCH domain-containing protein 36 (703 aa).

Disordered regions lie at residues methionine 1 to glycine 42, leucine 112 to lysine 176, valine 204 to serine 242, and histidine 442 to glutamine 481. Over residues glycine 9–glycine 25 the composition is skewed to low complexity. Residues leucine 112 to glycine 125 are compositionally biased toward basic and acidic residues. Positions valine 149 to proline 169 are enriched in polar residues. The segment at lysine 176–glutamate 203 adopts a C3H1-type zinc-finger fold. Residues threonine 451–glycine 468 show a composition bias toward basic and acidic residues. A compositionally biased stretch (low complexity) spans serine 470–glutamine 481.

The protein is Zinc finger CCCH domain-containing protein 36 of Oryza sativa subsp. japonica (Rice).